The sequence spans 436 residues: Methionine aminopeptidase 2 (436 aa).

Residues 1–61 (MSEIQPKTEV…KKKKAAPVAS (61 aa)) form a disordered region. Residues 16-26 (EEEEESDDEED) are compositionally biased toward acidic residues. Positions 44 to 56 (KKKKKKNKKKKKA) are enriched in basic residues. Position 191 (histidine 191) interacts with substrate. 3 residues coordinate a divalent metal cation: aspartate 211, aspartate 222, and histidine 291. Histidine 299 contributes to the substrate binding site. Positions 324 and 417 each coordinate a divalent metal cation.

Belongs to the peptidase M24A family. Methionine aminopeptidase eukaryotic type 2 subfamily. Co(2+) serves as cofactor. Requires Zn(2+) as cofactor. The cofactor is Mn(2+). Fe(2+) is required as a cofactor.

Its subcellular location is the cytoplasm. The catalysed reaction is Release of N-terminal amino acids, preferentially methionine, from peptides and arylamides.. Functionally, cotranslationally removes the N-terminal methionine from nascent proteins. The N-terminal methionine is often cleaved when the second residue in the primary sequence is small and uncharged (Met-Ala-, Cys, Gly, Pro, Ser, Thr, or Val). This is Methionine aminopeptidase 2 (metap2) from Dictyostelium discoideum (Social amoeba).